Reading from the N-terminus, the 1031-residue chain is Probable ATP-dependent RNA helicase DDX46 (1031 aa).

A compositionally biased stretch (basic residues) spans 1–24; the sequence is MGRESRHYRKRSASRGRSGSRSRS. Residues 1–228 form a disordered region; it reads MGRESRHYRK…EMEGEELDPL (228 aa). Residue Gly2 is the site of N-myristoyl glycine attachment. The span at 26-49 shows a compositional bias: basic and acidic residues; the sequence is SPSDKRSKRGDDRRSRSRDRDRRR. 2 stretches are compositionally biased toward basic residues: residues 50–73 and 81–103; these read ERSR…RSRS and ERRR…RRSR. A compositionally biased stretch (basic and acidic residues) spans 112–200; the sequence is KKTENRSRSK…EMKQGKKWSL (89 aa). Residues 152 to 197 adopt a coiled-coil conformation; it reads DQNKLEEEMRKRKERVEKWREEQRKKAMENIGELKKEIEEMKQGKK. Residue Lys186 forms a Glycyl lysine isopeptide (Lys-Gly) (interchain with G-Cter in SUMO2) linkage. The residue at position 199 (Ser199) is a Phosphoserine. Composition is skewed to acidic residues over residues 201-211 and 219-228; these read EDDDDDEDDPA and EMEGEELDPL. The residue at position 263 (Lys263) is an N6-acetyllysine. Tyr294 is modified (phosphotyrosine). Ser295 and Ser296 each carry phosphoserine. A Glycyl lysine isopeptide (Lys-Gly) (interchain with G-Cter in SUMO2) cross-link involves residue Lys325. A Phosphoserine modification is found at Ser346. The Q motif motif lies at 372-400; the sequence is KSWVQCGISMKILNSLKKHGYEKPTPIQT. Residues 403 to 581 form the Helicase ATP-binding domain; it reads IPAIMSGRDL…RRILSKPIEV (179 aa). 416–423 is an ATP binding site; it reads AKTGSGKT. The DEAD box motif lies at 529–532; sequence DEAD. Positions 592 to 753 constitute a Helicase C-terminal domain; that stretch reads DVEQQVIVIE…AVPPDLEKLW (162 aa). Lys776 is modified (N6-acetyllysine). Residue Lys779 forms a Glycyl lysine isopeptide (Lys-Gly) (interchain with G-Cter in SUMO2) linkage. At Ser804 the chain carries Phosphoserine. Lys903 is subject to N6-acetyllysine. Residues Lys907 and Lys915 each participate in a glycyl lysine isopeptide (Lys-Gly) (interchain with G-Cter in SUMO2) cross-link. Ser928 is modified (phosphoserine).

This sequence belongs to the DEAD box helicase family. DDX46/PRP5 subfamily. Component of the 17S U2 SnRNP complex, a ribonucleoprotein complex that contains small nuclear RNA (snRNA) U2 and a number of specific proteins. Within the 17S U2 SnRNP complex, DDX46 is part of the SF3B subcomplex, which is required for 'A' complex assembly formed by the stable binding of U2 snRNP to the branchpoint sequence in pre-mRNA. Recruited to the 17S U2 SnRNP complex following release of DDX42; DDX42 and DDX46 bind the SF3B subcomplex in a competitive manner.

The protein localises to the nucleus speckle. It is found in the nucleus. It localises to the cajal body. It carries out the reaction ATP + H2O = ADP + phosphate + H(+). Its function is as follows. Component of the 17S U2 SnRNP complex of the spliceosome, a large ribonucleoprotein complex that removes introns from transcribed pre-mRNAs. The 17S U2 SnRNP complex (1) directly participates in early spliceosome assembly and (2) mediates recognition of the intron branch site during pre-mRNA splicing by promoting the selection of the pre-mRNA branch-site adenosine, the nucleophile for the first step of splicing. Within the 17S U2 SnRNP complex, DDX46 plays essential roles during assembly of pre-spliceosome and proofreading of the branch site. This is Probable ATP-dependent RNA helicase DDX46 from Homo sapiens (Human).